Reading from the N-terminus, the 275-residue chain is Proteasome subunit beta (275 aa).

A propeptide spans 1–52 (MQDTTANQVAANATSSFTEHLQRNRPGLLPYNQPFPAALTGAGSQPLQVPHA) (removed in mature form; by autocatalysis). Thr53 (nucleophile) is an active-site residue.

Belongs to the peptidase T1B family. The 20S proteasome core is composed of 14 alpha and 14 beta subunits that assemble into four stacked heptameric rings, resulting in a barrel-shaped structure. The two inner rings, each composed of seven catalytic beta subunits, are sandwiched by two outer rings, each composed of seven alpha subunits. The catalytic chamber with the active sites is on the inside of the barrel. Has a gated structure, the ends of the cylinder being occluded by the N-termini of the alpha-subunits. Is capped by the proteasome-associated ATPase, ARC.

It is found in the cytoplasm. It catalyses the reaction Cleavage of peptide bonds with very broad specificity.. Its pathway is protein degradation; proteasomal Pup-dependent pathway. Its activity is regulated as follows. The formation of the proteasomal ATPase ARC-20S proteasome complex, likely via the docking of the C-termini of ARC into the intersubunit pockets in the alpha-rings, may trigger opening of the gate for substrate entry. Interconversion between the open-gate and close-gate conformations leads to a dynamic regulation of the 20S proteasome proteolysis activity. Component of the proteasome core, a large protease complex with broad specificity involved in protein degradation. The polypeptide is Proteasome subunit beta (Arthrobacter sp. (strain FB24)).